Here is a 735-residue protein sequence, read N- to C-terminus: Disintegrin and metalloproteinase domain-containing protein 2 (735 aa).

The signal sequence occupies residues M1–M16. Residues D17–K174 constitute a propeptide that is removed on maturation. Residues D17–R686 lie on the Extracellular side of the membrane. N-linked (GlcNAc...) asparagine glycosylation is found at N76, N122, and N220. Residues K178–P375 form the Peptidase M12B domain. 4 cysteine pairs are disulfide-bonded: C287–C370, C329–C354, C331–C336, and C445–C465. 3 N-linked (GlcNAc...) asparagine glycosylation sites follow: N353, N459, and N566. In terms of domain architecture, Disintegrin spans Q384–T473. The EGF-like domain maps to L612–S645. 3 cysteine pairs are disulfide-bonded: C616–C627, C621–C633, and C635–C644. Residues W687–V707 traverse the membrane as a helical segment. The Cytoplasmic segment spans residues K708–G735. Phosphoserine is present on S729.

As to quaternary structure, heterodimer with ADAM1/fertilin subunit alpha. Post-translationally, the signal and the metalloprotease domain are cleaved during the epididymal maturation of the spermatozoa. Expressed specifically in testis.

The protein resides in the membrane. Sperm surface membrane protein that may be involved in sperm-egg plasma membrane adhesion and fusion during fertilization. Could have a direct role in sperm-zona binding or migration of sperm from the uterus into the oviduct. Interactions with egg membrane could be mediated via binding between its disintegrin-like domain to one or more integrins receptors on the egg. This is a non catalytic metalloprotease-like protein. This chain is Disintegrin and metalloproteinase domain-containing protein 2 (ADAM2), found in Macaca fascicularis (Crab-eating macaque).